The following is a 428-amino-acid chain: MESLTLQPIKKVNGEVNLPGSKSVSNRALLLAALAKGTTRLTNLLDSDDIRHMLNALTKLGVHYELSADKTVCVVEGLGRPFTATEAQELFLGNAGTAMRPLAAALCLGKGEFVLTGEPRMKERPIGHLVDALREAGAQIEYLENENYPPLKINATGLQAGTVNIDGSISSQFLTAFLMAAPLAQGEVKIHIVGELVSKPYIDITLHIMKQFGVDVVNNAYQEFIIPAGQSYVSPGQFLVEGDASSASYFLAAAAIKGGEIKVTGIGKNSIQGDIHFADALEKMGAEIEWGEDYVISRVGRLKGIDMDYNHIPDAAMTIATTALFAQGTTAIRNVYNWRVKETDRLSAMATELRKVGAEVEEGEDYLIVNPPQQLTHAAIDTYDDHRIAMCFSLVALSDTPVTINDPKCTSKTFPDYFDKLASLSELA.

The 3-phosphoshikimate site is built by Lys-22, Ser-23, and Arg-27. A phosphoenolpyruvate-binding site is contributed by Lys-22. Phosphoenolpyruvate-binding residues include Gly-96 and Arg-124. Positions 170, 171, 172, 198, 314, 337, and 341 each coordinate 3-phosphoshikimate. Position 172 (Gln-172) interacts with phosphoenolpyruvate. The active-site Proton acceptor is the Asp-314. Phosphoenolpyruvate-binding residues include Arg-345, Arg-387, and Lys-412.

Belongs to the EPSP synthase family. In terms of assembly, monomer.

It localises to the cytoplasm. The enzyme catalyses 3-phosphoshikimate + phosphoenolpyruvate = 5-O-(1-carboxyvinyl)-3-phosphoshikimate + phosphate. Its pathway is metabolic intermediate biosynthesis; chorismate biosynthesis; chorismate from D-erythrose 4-phosphate and phosphoenolpyruvate: step 6/7. In terms of biological role, catalyzes the transfer of the enolpyruvyl moiety of phosphoenolpyruvate (PEP) to the 5-hydroxyl of shikimate-3-phosphate (S3P) to produce enolpyruvyl shikimate-3-phosphate and inorganic phosphate. This Vibrio vulnificus (strain YJ016) protein is 3-phosphoshikimate 1-carboxyvinyltransferase.